The following is a 406-amino-acid chain: Elongation factor Tu-A (406 aa).

The tr-type G domain maps to 10-215 (KPHVNVGTIG…AIDEYIPTPV (206 aa)). Residues 19–26 (GHVDHGKT) form a G1 region. 19–26 (GHVDHGKT) provides a ligand contact to GTP. T26 serves as a coordination point for Mg(2+). Residues 61–65 (GITIN) are G2. A G3 region spans residues 82–85 (DCPG). GTP contacts are provided by residues 82-86 (DCPGH) and 137-140 (NKVD). The tract at residues 137 to 140 (NKVD) is G4. The tract at residues 175–177 (SAL) is G5. T395 carries the post-translational modification Phosphothreonine.

Belongs to the TRAFAC class translation factor GTPase superfamily. Classic translation factor GTPase family. EF-Tu/EF-1A subfamily. Monomer. Binds to the 70S ribosome, contacts tmRNA during trans-translation. Phosphorylated on a threonine.

It localises to the cytoplasm. The enzyme catalyses GTP + H2O = GDP + phosphate + H(+). In terms of biological role, GTP hydrolase that promotes the GTP-dependent binding of aminoacyl-tRNA to the A-site of ribosomes during protein biosynthesis. Its function is as follows. EF-Tu-GDP binds to the acceptor arm of tmRNA by interacting with its acceptor arm, suggesting that GTP hydrolysis by EF-Tu is essential for tmRNA function. Protects glycyl-tRNA(Gly) from hydrolysis by E.coli D-aminoacyl-tRNA deacylase (dtd). This chain is Elongation factor Tu-A, found in Thermus thermophilus (strain ATCC 27634 / DSM 579 / HB8).